Consider the following 150-residue polypeptide: 3-hydroxyacyl-[acyl-carrier-protein] dehydratase FabZ (150 aa).

The active site involves H51.

Belongs to the thioester dehydratase family. FabZ subfamily.

It is found in the cytoplasm. The catalysed reaction is a (3R)-hydroxyacyl-[ACP] = a (2E)-enoyl-[ACP] + H2O. Functionally, involved in unsaturated fatty acids biosynthesis. Catalyzes the dehydration of short chain beta-hydroxyacyl-ACPs and long chain saturated and unsaturated beta-hydroxyacyl-ACPs. In Rubrobacter xylanophilus (strain DSM 9941 / JCM 11954 / NBRC 16129 / PRD-1), this protein is 3-hydroxyacyl-[acyl-carrier-protein] dehydratase FabZ.